The following is a 329-amino-acid chain: Biotin synthase (329 aa).

Residues 48–278 (FLGTGVDLCS…DRKIAVCGGR (231 aa)) form the Radical SAM core domain. [4Fe-4S] cluster is bound by residues C66, C70, and C73. S143 and C203 together coordinate [2Fe-2S] cluster.

The protein belongs to the radical SAM superfamily. Biotin synthase family. As to quaternary structure, homodimer. The cofactor is [4Fe-4S] cluster. [2Fe-2S] cluster serves as cofactor.

It carries out the reaction (4R,5S)-dethiobiotin + (sulfur carrier)-SH + 2 reduced [2Fe-2S]-[ferredoxin] + 2 S-adenosyl-L-methionine = (sulfur carrier)-H + biotin + 2 5'-deoxyadenosine + 2 L-methionine + 2 oxidized [2Fe-2S]-[ferredoxin]. Its pathway is cofactor biosynthesis; biotin biosynthesis; biotin from 7,8-diaminononanoate: step 2/2. Functionally, catalyzes the conversion of dethiobiotin (DTB) to biotin by the insertion of a sulfur atom into dethiobiotin via a radical-based mechanism. The chain is Biotin synthase from Geobacter sulfurreducens (strain ATCC 51573 / DSM 12127 / PCA).